The primary structure comprises 760 residues: Forkhead box protein M1 (760 aa).

Disordered stretches follow at residues 1–54 (MRTS…AESS) and 95–167 (GKES…SYAG). 2 stretches are compositionally biased toward low complexity: residues 43 to 54 (PAQASQEVAESS) and 110 to 124 (SSGG…PQAH). Positions 125 to 134 (SSRDSKRAEV) are enriched in basic and acidic residues. The span at 140-149 (GPKPAAKGVP) shows a compositional bias: low complexity. Glycyl lysine isopeptide (Lys-Gly) (interchain with G-Cter in SUMO2) cross-links involve residues Lys199 and Lys323. Residues 233–325 (ERPPYSYMAM…LTLDQVFKPL (93 aa)) constitute a DNA-binding region (fork-head). The segment at 323-348 (KPLEPGSPQSPEHLESQQKRPNPELH) is disordered. A Phosphoserine modification is found at Ser329. The segment covering 334–348 (EHLESQQKRPNPELH) has biased composition (basic and acidic residues). A Glycyl lysine isopeptide (Lys-Gly) (interchain with G-Cter in SUMO2) cross-link involves residue Lys354. Ser374 bears the Phosphoserine; by CHEK2 mark. Glycyl lysine isopeptide (Lys-Gly) (interchain with G-Cter in SUMO2) cross-links involve residues Lys420 and Lys438. Disordered regions lie at residues 500–560 (SWED…PDLF), 577–635 (ESSE…LDFS), and 660–709 (PLKS…IPSL). Position 521 is a phosphoserine (Ser521). Residues 531–542 (VTKRREKREVSR) show a composition bias toward basic and acidic residues. The segment covering 604 to 613 (PVSSTPSKSV) has biased composition (polar residues). Thr608 carries the phosphothreonine; by CDK1 modification. Thr624 is modified (phosphothreonine). Residues Ser727 and Ser736 each carry the phosphoserine; by PLK1 modification.

Post-translationally, phosphorylated in M (mitotic) phase. Phosphorylation by the checkpoint kinase CHEK2 in response to DNA damage increases the FOXM1 protein stability probably stimulating the transcription of genes involved in DNA repair. Phosphorylated by CDK1 in late S and G2 phases, creating docking sites for the POLO box domains of PLK1. Subsequently, PLK1 binds and phosphorylates FOXM1, leading to activation of transcriptional activity and subsequent enhanced expression of key mitotic regulators. Phosphorylated by GSK3B leading to ubiquitination and proteasomal degradation. Expressed in fetal heart, brain, liver, lung, kidney and limb, but only in adult thymus. Appears to be expressed only in adult organs containing proliferating/cycling cells or in response to growth factors.

The protein resides in the nucleus. Transcription factor regulating the expression of cell cycle genes essential for DNA replication and mitosis. Plays a role in the control of cell proliferation. Also plays a role in DNA break repair, participating in the DNA damage checkpoint response. Promotes transcription of PHB2. This Mus musculus (Mouse) protein is Forkhead box protein M1 (Foxm1).